The following is a 154-amino-acid chain: S-protein homolog 12 (154 aa).

The signal sequence occupies residues 1–30; that stretch reads MGTNKIPKTLNGNLVLILIITIMMVTHSHG.

This sequence belongs to the plant self-incompatibility (S1) protein family.

Its subcellular location is the secreted. This chain is S-protein homolog 12, found in Arabidopsis thaliana (Mouse-ear cress).